A 303-amino-acid chain; its full sequence is Probable RuBisCO transcriptional regulator (303 aa).

The HTH lysR-type domain occupies 6–63 (FTLDQLRIFQAIVVEGSFQKAAQSLYISQPAVSLQIQNLEQQLNAPLFDRSHRKAKLT). The H-T-H motif DNA-binding region spans 23–42 (FQKAAQSLYISQPAVSLQIQ).

Belongs to the LysR transcriptional regulatory family.

It is found in the plastid. It localises to the chloroplast. Functionally, trans-acting transcriptional regulator of RuBisCO genes (rbcL and rbcS) expression. This chain is Probable RuBisCO transcriptional regulator (rbcR), found in Cyanidioschyzon merolae (strain NIES-3377 / 10D) (Unicellular red alga).